We begin with the raw amino-acid sequence, 404 residues long: Tryptophan synthase beta chain (404 aa).

An N6-(pyridoxal phosphate)lysine modification is found at lysine 94.

It belongs to the TrpB family. Tetramer of two alpha and two beta chains. Pyridoxal 5'-phosphate is required as a cofactor.

It catalyses the reaction (1S,2R)-1-C-(indol-3-yl)glycerol 3-phosphate + L-serine = D-glyceraldehyde 3-phosphate + L-tryptophan + H2O. It participates in amino-acid biosynthesis; L-tryptophan biosynthesis; L-tryptophan from chorismate: step 5/5. Functionally, the beta subunit is responsible for the synthesis of L-tryptophan from indole and L-serine. The sequence is that of Tryptophan synthase beta chain from Staphylococcus aureus (strain MRSA252).